The following is a 248-amino-acid chain: Endonuclease V (248 aa).

Mg(2+) contacts are provided by Asp54 and Asp118.

It belongs to the endonuclease V family. Requires Mg(2+) as cofactor.

It localises to the cytoplasm. It carries out the reaction Endonucleolytic cleavage at apurinic or apyrimidinic sites to products with a 5'-phosphate.. Functionally, DNA repair enzyme involved in the repair of deaminated bases. Selectively cleaves double-stranded DNA at the second phosphodiester bond 3' to a deoxyinosine leaving behind the intact lesion on the nicked DNA. The polypeptide is Endonuclease V (Natronomonas pharaonis (strain ATCC 35678 / DSM 2160 / CIP 103997 / JCM 8858 / NBRC 14720 / NCIMB 2260 / Gabara) (Halobacterium pharaonis)).